A 177-amino-acid chain; its full sequence is Bifunctional protein PyrR (177 aa).

Residues 99-111 (VILVDDVIYKGRT) carry the PRPP-binding motif.

It belongs to the purine/pyrimidine phosphoribosyltransferase family. PyrR subfamily.

It catalyses the reaction UMP + diphosphate = 5-phospho-alpha-D-ribose 1-diphosphate + uracil. Functionally, regulates the transcription of the pyrimidine nucleotide (pyr) operon in response to exogenous pyrimidines. Its function is as follows. Also displays a weak uracil phosphoribosyltransferase activity which is not physiologically significant. The polypeptide is Bifunctional protein PyrR (Microcystis aeruginosa (strain NIES-843 / IAM M-2473)).